A 138-amino-acid chain; its full sequence is UPF0201 protein PH1010 (138 aa).

It belongs to the UPF0201 family.

This is UPF0201 protein PH1010 from Pyrococcus horikoshii (strain ATCC 700860 / DSM 12428 / JCM 9974 / NBRC 100139 / OT-3).